The sequence spans 364 residues: Dihydroorotate dehydrogenase (quinone) (364 aa).

Residues 62–66 (AGFDK) and threonine 86 contribute to the FMN site. Residue lysine 66 participates in substrate binding. 111–115 (NRMGF) contributes to the substrate binding site. 2 residues coordinate FMN: asparagine 142 and asparagine 175. Asparagine 175 lines the substrate pocket. Serine 178 acts as the Nucleophile in catalysis. Asparagine 180 is a binding site for substrate. FMN-binding residues include lysine 216 and threonine 244. 245–246 (NT) serves as a coordination point for substrate. FMN is bound by residues glycine 267, glycine 296, and 317–318 (YT).

Belongs to the dihydroorotate dehydrogenase family. Type 2 subfamily. In terms of assembly, monomer. The cofactor is FMN.

It localises to the cell membrane. The enzyme catalyses (S)-dihydroorotate + a quinone = orotate + a quinol. Its pathway is pyrimidine metabolism; UMP biosynthesis via de novo pathway; orotate from (S)-dihydroorotate (quinone route): step 1/1. Catalyzes the conversion of dihydroorotate to orotate with quinone as electron acceptor. The protein is Dihydroorotate dehydrogenase (quinone) of Anaeromyxobacter dehalogenans (strain 2CP-1 / ATCC BAA-258).